A 139-amino-acid polypeptide reads, in one-letter code: MNKHALLNADMNYLVATLGHTDEVAICDAGLPIPAAVQRIDLALTHGVPSFIATVKIWLASSQIEGVVLAQEFADVSPECHQALLVEIEAEQLATGRTFSIEYVSHEAFKQRTHNSRAVIRTGECTPYANVIFKTGVVF.

Residue H20 is the Proton donor of the active site. Substrate is bound by residues D28, H106, and 128-130 (YAN).

It belongs to the RbsD / FucU family. RbsD subfamily. In terms of assembly, homodecamer.

It is found in the cytoplasm. It carries out the reaction beta-D-ribopyranose = beta-D-ribofuranose. The protein operates within carbohydrate metabolism; D-ribose degradation; D-ribose 5-phosphate from beta-D-ribopyranose: step 1/2. Functionally, catalyzes the interconversion of beta-pyran and beta-furan forms of D-ribose. In Shewanella halifaxensis (strain HAW-EB4), this protein is D-ribose pyranase.